Reading from the N-terminus, the 385-residue chain is 8-amino-7-oxononanoate synthase (385 aa).

Arg21 contacts substrate. 108–109 serves as a coordination point for pyridoxal 5'-phosphate; sequence GF. His133 lines the substrate pocket. Pyridoxal 5'-phosphate contacts are provided by Ser179, His207, and Thr233. Position 236 is an N6-(pyridoxal phosphate)lysine (Lys236). Substrate is bound at residue Thr352.

The protein belongs to the class-II pyridoxal-phosphate-dependent aminotransferase family. BioF subfamily. Homodimer. It depends on pyridoxal 5'-phosphate as a cofactor.

The catalysed reaction is 6-carboxyhexanoyl-[ACP] + L-alanine + H(+) = (8S)-8-amino-7-oxononanoate + holo-[ACP] + CO2. The protein operates within cofactor biosynthesis; biotin biosynthesis. Functionally, catalyzes the decarboxylative condensation of pimeloyl-[acyl-carrier protein] and L-alanine to produce 8-amino-7-oxononanoate (AON), [acyl-carrier protein], and carbon dioxide. The polypeptide is 8-amino-7-oxononanoate synthase (Salmonella paratyphi C (strain RKS4594)).